We begin with the raw amino-acid sequence, 95 residues long: Co-chaperonin GroES (95 aa).

Belongs to the GroES chaperonin family. In terms of assembly, heptamer of 7 subunits arranged in a ring. Interacts with the chaperonin GroEL.

Its subcellular location is the cytoplasm. Its function is as follows. Together with the chaperonin GroEL, plays an essential role in assisting protein folding. The GroEL-GroES system forms a nano-cage that allows encapsulation of the non-native substrate proteins and provides a physical environment optimized to promote and accelerate protein folding. GroES binds to the apical surface of the GroEL ring, thereby capping the opening of the GroEL channel. In Streptococcus salivarius, this protein is Co-chaperonin GroES.